Here is a 505-residue protein sequence, read N- to C-terminus: MVTIRADEISNIIRERIEQYNREVKVVTIGTVLQVGDGIARIYGLDEVMAGELVEFEEGTIGIALNLESNNVGVVLMGDGLMIQEGSSVKATGKIAQIPVSEAYLGRVINALAKPIDGRGEISASESRLIESPAPGIISRRSVYEPLQTGLIAIDSMIPIGRGQRELIIGDRQTGKTAVATDTILNQQGQNVICVYVAIGQKASSVAQVVTTLQERGAMDYTIVVAETADSPATLQYLAPYTGAALAEFFMYLKQHTLIIYDDPSKQAQAYRQMSLLLRRPPGREAYPGDVFYLHSRLLERAAKLSSQLGEGSMTALPIVETQSGDVSAYIPTNVISITDGQIFLSADLFNAGIRPAINVGISVSRVGSAAQIKAMKQVAGKLKLELAQFAELEAFAQFASDLDKATQNQLARGQRLRELLKQSQSAPLTVEEQIMTIYTGTNGYLDSLEIGQVRKFLVELRTYLKTNKPQFQEIISSTKTFTEEAETILKEAIQEQMERFLLQE.

ATP is bound at residue 170–177; the sequence is GDRQTGKT.

The protein belongs to the ATPase alpha/beta chains family. In terms of assembly, F-type ATPases have 2 components, CF(1) - the catalytic core - and CF(0) - the membrane proton channel. CF(1) has five subunits: alpha(3), beta(3), gamma(1), delta(1), epsilon(1). CF(0) has four main subunits: a, b, b' and c.

Its subcellular location is the plastid. It is found in the chloroplast thylakoid membrane. The enzyme catalyses ATP + H2O + 4 H(+)(in) = ADP + phosphate + 5 H(+)(out). In terms of biological role, produces ATP from ADP in the presence of a proton gradient across the membrane. The alpha chain is a regulatory subunit. The polypeptide is ATP synthase subunit alpha, chloroplastic (Carica papaya (Papaya)).